Reading from the N-terminus, the 148-residue chain is MKEKTPFKNEKEFHEMVKKTKKGTFSGWYIIDKDNNSVEFSGKFNRQFKLNKPVITVNTEYVTRKELNEYKDSNDQRLTKIETTLAAQGEQINKLTQTVEKQGEQIRELQVEQKAQGEQIKAQGETLKLILQTLQKMSDRLDKIDPSK.

Belongs to the UPF0134 family.

The polypeptide is UPF0134 protein MPN_204 (Mycoplasma pneumoniae (strain ATCC 29342 / M129 / Subtype 1) (Mycoplasmoides pneumoniae)).